Consider the following 58-residue polypeptide: UPF0434 protein NT01EI_2448 (58 aa).

Belongs to the UPF0434 family.

The chain is UPF0434 protein NT01EI_2448 from Edwardsiella ictaluri (strain 93-146).